Consider the following 622-residue polypeptide: 1-deoxy-D-xylulose-5-phosphate synthase (622 aa).

Thiamine diphosphate contacts are provided by residues His71 and Gly112–Ser114. Asp143 is a Mg(2+) binding site. Thiamine diphosphate contacts are provided by residues Gly144 to Ala145, Asn172, Tyr283, and Glu363. Mg(2+) is bound at residue Asn172.

This sequence belongs to the transketolase family. DXPS subfamily. Homodimer. It depends on Mg(2+) as a cofactor. Requires thiamine diphosphate as cofactor.

The catalysed reaction is D-glyceraldehyde 3-phosphate + pyruvate + H(+) = 1-deoxy-D-xylulose 5-phosphate + CO2. It participates in metabolic intermediate biosynthesis; 1-deoxy-D-xylulose 5-phosphate biosynthesis; 1-deoxy-D-xylulose 5-phosphate from D-glyceraldehyde 3-phosphate and pyruvate: step 1/1. Catalyzes the acyloin condensation reaction between C atoms 2 and 3 of pyruvate and glyceraldehyde 3-phosphate to yield 1-deoxy-D-xylulose-5-phosphate (DXP). This is 1-deoxy-D-xylulose-5-phosphate synthase from Caldanaerobacter subterraneus subsp. tengcongensis (strain DSM 15242 / JCM 11007 / NBRC 100824 / MB4) (Thermoanaerobacter tengcongensis).